The sequence spans 219 residues: 7-cyano-7-deazaguanine synthase (219 aa).

10–20 contacts ATP; the sequence is FSGGQDSTTCL. Residues cysteine 188, cysteine 197, cysteine 200, and cysteine 203 each coordinate Zn(2+).

It belongs to the QueC family. As to quaternary structure, homodimer. Requires Zn(2+) as cofactor.

It carries out the reaction 7-carboxy-7-deazaguanine + NH4(+) + ATP = 7-cyano-7-deazaguanine + ADP + phosphate + H2O + H(+). Its pathway is purine metabolism; 7-cyano-7-deazaguanine biosynthesis. Catalyzes the ATP-dependent conversion of 7-carboxy-7-deazaguanine (CDG) to 7-cyano-7-deazaguanine (preQ(0)). This Clostridium botulinum (strain Kyoto / Type A2) protein is 7-cyano-7-deazaguanine synthase.